The chain runs to 513 residues: Plexin domain-containing protein 2 (513 aa).

An N-terminal signal peptide occupies residues 1-24 (MGARSESLVGVVLLFQLLADRLWC). At 25–438 (AATASDSLYD…AEMKTGTLHT (414 aa)) the chain is on the extracellular side. Residues Asn88, Asn145, Asn198, Asn206, Asn222, and Asn330 are each glycosylated (N-linked (GlcNAc...) asparagine). Residues 312–357 (TCLQFNSCSSCVSSMIGFNCSWCNIPQRCSSGFDRHRQDWVENGCT) form the PSI domain. The helical transmembrane segment at 439 to 459 (GLIIGILILVLLIITAILVAV) threads the bilayer. Topologically, residues 460-513 (YMYHHPTSSASLFLIERRPSRWPAMKFRRGSGHPAYAEVEPIGEKEGFIVSEQC) are cytoplasmic.

The protein belongs to the plexin family.

Its subcellular location is the membrane. The sequence is that of Plexin domain-containing protein 2 (plxdc2) from Xenopus laevis (African clawed frog).